The sequence spans 443 residues: uncharacterized protein (443 aa).

This is an uncharacterized protein from Saccharomyces cerevisiae (strain ATCC 204508 / S288c) (Baker's yeast).